A 181-amino-acid polypeptide reads, in one-letter code: Adenine phosphoribosyltransferase (181 aa).

The protein belongs to the purine/pyrimidine phosphoribosyltransferase family. Homodimer.

It localises to the cytoplasm. The enzyme catalyses AMP + diphosphate = 5-phospho-alpha-D-ribose 1-diphosphate + adenine. It functions in the pathway purine metabolism; AMP biosynthesis via salvage pathway; AMP from adenine: step 1/1. In terms of biological role, catalyzes a salvage reaction resulting in the formation of AMP, that is energically less costly than de novo synthesis. The sequence is that of Adenine phosphoribosyltransferase from Vibrio campbellii (strain ATCC BAA-1116).